The following is a 78-amino-acid chain: Small ribosomal subunit protein uS17 (78 aa).

Belongs to the universal ribosomal protein uS17 family. Part of the 30S ribosomal subunit.

One of the primary rRNA binding proteins, it binds specifically to the 5'-end of 16S ribosomal RNA. This is Small ribosomal subunit protein uS17 from Pelagibacter ubique (strain HTCC1062).